The following is a 145-amino-acid chain: Ribosomal RNA large subunit methyltransferase H (145 aa).

Residues Leu64, Gly93, and 112–117 (LSPLTF) each bind S-adenosyl-L-methionine.

It belongs to the RNA methyltransferase RlmH family. In terms of assembly, homodimer.

It localises to the cytoplasm. The enzyme catalyses pseudouridine(1915) in 23S rRNA + S-adenosyl-L-methionine = N(3)-methylpseudouridine(1915) in 23S rRNA + S-adenosyl-L-homocysteine + H(+). Specifically methylates the pseudouridine at position 1915 (m3Psi1915) in 23S rRNA. The chain is Ribosomal RNA large subunit methyltransferase H from Prochlorococcus marinus (strain NATL2A).